A 267-amino-acid chain; its full sequence is Chaperone protein MyfB (267 aa).

The signal sequence occupies residues 1-34 (MKYKFSHNFISYNLFLFVFMSLILLPYSHASSMG). Cysteines 127 and 164 form a disulfide.

It belongs to the periplasmic pilus chaperone family.

It localises to the periplasm. Required for the biogenesis of the MyfA fimbria. The sequence is that of Chaperone protein MyfB (myfB) from Yersinia enterocolitica.